The sequence spans 543 residues: Periplasmic oligopeptide-binding protein OppA (543 aa).

The first 26 residues, 1–26, serve as a signal peptide directing secretion; it reads MTNITKRSLVAAGVLAALMAGNVALA. Residues Cys-297 and Cys-443 are joined by a disulfide bond.

This sequence belongs to the bacterial solute-binding protein 5 family. The complex is composed of two ATP-binding proteins (OppD and OppF), two transmembrane proteins (OppB and OppC) and a solute-binding protein (OppA).

The protein resides in the periplasm. Part of the ABC transporter complex OppABCDF involved in the uptake of oligopeptides. Plays an important nutritional role. Binds peptides containing from two to five amino acid residues. Displays a preference for tripeptides and tetrapeptides over dipeptides and pentapeptides, for peptides composed of L-amino acids and for positively charged peptides. Cannot bind the cell wall peptide L-Ala-D-Gly-gamma-meso-diaminopimelic acid. The polypeptide is Periplasmic oligopeptide-binding protein OppA (Escherichia coli (strain K12)).